Reading from the N-terminus, the 402-residue chain is MKREKIALAYSGGLDTSVMIKWLKDKYDADIIAVTGNLGQEKEIENLEQKAFDTGASGFSFLDLRKEFVENYIWPALKAGALYEEVYPLATALGRPLLAKALVDVALSEDCTMIAHGCTGKGNDQVRFEVTFASLAPHLKVLAPLREWEFNSREAEMAYAEKHGIPVSATKKSPYSIDENIWGISIECGVLEDPMVAPPEDAYQITTSPEKAPDNAAVIDIEFEQGVPVALDGRKMEGLDLIVELNKHGAAHGVGRLDMIENRVVGIKSREIYEAPAATILHFAHRELERLTLEKTVFQYKNTISQDYANLIYNGTWFSPMREALDGFVDATQKHVTGLVRVKLFKGSVTLLGRTSPWSLYNEELATYTEADTFNHKAAEGFIHLYGLGLKTYSEVQANNRK.

9–17 lines the ATP pocket; the sequence is AYSGGLDTS. Tyrosine 87 is a binding site for L-citrulline. Position 117 (glycine 117) interacts with ATP. L-aspartate contacts are provided by threonine 119, asparagine 123, and aspartate 124. Asparagine 123 provides a ligand contact to L-citrulline. L-citrulline-binding residues include arginine 127, serine 176, serine 185, glutamate 261, and tyrosine 273.

It belongs to the argininosuccinate synthase family. Type 1 subfamily. In terms of assembly, homotetramer.

Its subcellular location is the cytoplasm. The enzyme catalyses L-citrulline + L-aspartate + ATP = 2-(N(omega)-L-arginino)succinate + AMP + diphosphate + H(+). Its pathway is amino-acid biosynthesis; L-arginine biosynthesis; L-arginine from L-ornithine and carbamoyl phosphate: step 2/3. The chain is Argininosuccinate synthase from Chlorobium phaeobacteroides (strain BS1).